We begin with the raw amino-acid sequence, 553 residues long: MQVEGPDTNFVSDLALGSKKRRLSKTSVQEDDHTNVVSEVNKNKKKKKAKPMTCTLLKSVVEKGIGIKDVRDMTQYLLQAENNSPKWIDICNRSSLQKMIVLFIPGLQPDDFENGKNTFNEISDDNFKYIPGEIASTFHTFPVMAPGSKMTLFSPYNSFINVGLSKMEKINKLKELQKKKKITINDLVLSEQQLVANDYPLDSGDTNFDTDWVQTVDFTHGGSHIFALDCEMCLSEQGLVLTRISLVNFDNEVIYEELVKPDVPIVDYLTRYSGITEEKLTVGAKKTLREVQKDLLKIISRSDILIGHSLQNDLKVMKLKHPLVVDTAIIYHHKAGDPFKPSLKYLSETFLNKSIQNGEHDSVEDARACLELTKLKILNGLAFGIGINTENLFTKLHRFEVKTVLLNDMIIKNHTEDDSKGQLIRCVEDDETWTHIHENLNKDVKLIVGRIKNLERSRNYNKKPRKETPSFDASMVLHDIGQHLTQLYENATPGTMILIMSGTGDTRPWNNLSTELEFIQDKKERLDKRREREPEIVEAIKLARGGVASFTVK.

Serine 24 carries the post-translational modification Phosphoserine. Positions 167–194 form a coiled coil; it reads MEKINKLKELQKKKKITINDLVLSEQQL. The region spanning 225 to 373 is the Exonuclease domain; that stretch reads IFALDCEMCL…EDARACLELT (149 aa). Residues 509–533 are a coiled coil; that stretch reads WNNLSTELEFIQDKKERLDKRRERE.

This sequence belongs to the REXO1/REXO3 family.

The protein resides in the nucleus. In terms of biological role, 3' exoribonuclease required for 5S rRNA maturation and for the proper maturation of the 5' cistron of the tRNA-Arg3 dicistronic gene. Involved with REX2 in the maturation of the 5.8S rRNA, and with REX2 and REX3, in the 3' processing of the U5L snRNA. The polypeptide is RNA exonuclease 1 (RNH70) (Saccharomyces cerevisiae (strain ATCC 204508 / S288c) (Baker's yeast)).